A 171-amino-acid polypeptide reads, in one-letter code: Co-chaperone protein HscB (171 aa).

The 73-residue stretch at 2 to 74 (DYFTLFGLPA…LTRAEYLLSL (73 aa)) folds into the J domain.

It belongs to the HscB family. As to quaternary structure, interacts with HscA and stimulates its ATPase activity. Interacts with IscU.

Its function is as follows. Co-chaperone involved in the maturation of iron-sulfur cluster-containing proteins. Seems to help targeting proteins to be folded toward HscA. This Salmonella schwarzengrund (strain CVM19633) protein is Co-chaperone protein HscB.